We begin with the raw amino-acid sequence, 33 residues long: Dolabellanin-B2 (33 aa).

In terms of processing, contains two disulfide bonds. Up to two of the methionines may be oxidized to methionine sulfoxides.

The protein resides in the secreted. Its function is as follows. Has antibacterial activity against Gram-negative bacteria E.coli JM109 and DH5-alpha, H.influenza IID 983, and V.vulnificus RIMD 2219009. Has antibacterial activity against Gram-positive bacteria S.aureus IID 1677, B.subtilis RIMD 0225014 and L.monocytogenes VIU206. Possesses antifungal activity against S.cerevisiae A581A, S.pombe IFO 1628, C.albicans ATCC 36232 and TIMM-1623, and C.tropicalis TIMM-0313. This chain is Dolabellanin-B2, found in Dolabella auricularia (Shoulderblade sea cat).